The primary structure comprises 146 residues: UPF0735 ACT domain-containing protein Teth514_2312 (146 aa).

In terms of domain architecture, ACT spans 71–146; sequence TLSMVLDHMP…GVRKIEILGE (76 aa).

It belongs to the UPF0735 family.

The sequence is that of UPF0735 ACT domain-containing protein Teth514_2312 from Thermoanaerobacter sp. (strain X514).